The following is a 517-amino-acid chain: Protein AGENET DOMAIN (AGD)-CONTAINING P1 (517 aa).

The interval 1 to 35 is disordered; that stretch reads MLRPRRSLGVSSPAKQRKKAAPKNSMATRANRKRL. Plant Agenet, chromatin-binding regions lie at residues 37–111 and 117–173; these read SYLK…PPMS and KKIV…EWVD. Residues 177–202 form a disordered region; the sequence is KPPLEETEEEEDESEEDKLDDSEDEE. Over residues 181 to 202 the composition is skewed to acidic residues; sequence EETEEEEDESEEDKLDDSEDEE. 4 plant Agenet, chromatin-binding regions span residues 219 to 287, 289 to 345, 378 to 446, and 449 to 505; these read QMFS…PRDE, IDFA…DWVD, QAFS…LESV, and SPFE…EWID.

Expressed ubiquitously during vegetative stage, in meristems (e.g. root tips and shoot apical meristem), and in ovules and young seeds during reproductive stage.

The protein resides in the nucleus. Its function is as follows. Heterochromatin-binding protein that preferentially occupies long transposons and specifically recognizes the histone H3 'Lys-9' methylation (H3K9me) marks, with a stronger affinity for dimethylated H3K9 (H3K9me2). Required for transcriptional silencing, non-CG DNA methylation (e.g. CHG and CHH regions), and H3K9 dimethylation (H3K9me2) at some loci. Mediates heterochromatin phase separation and chromocenter formation. This is Protein AGENET DOMAIN (AGD)-CONTAINING P1 from Arabidopsis thaliana (Mouse-ear cress).